We begin with the raw amino-acid sequence, 98 residues long: Large ribosomal subunit protein uL23 (98 aa).

It belongs to the universal ribosomal protein uL23 family. Part of the 50S ribosomal subunit. Contacts protein L29, and trigger factor when it is bound to the ribosome.

In terms of biological role, one of the early assembly proteins it binds 23S rRNA. One of the proteins that surrounds the polypeptide exit tunnel on the outside of the ribosome. Forms the main docking site for trigger factor binding to the ribosome. This chain is Large ribosomal subunit protein uL23, found in Frankia alni (strain DSM 45986 / CECT 9034 / ACN14a).